Here is a 597-residue protein sequence, read N- to C-terminus: Formate--tetrahydrofolate ligase (597 aa).

Threonine 84 to serine 91 contacts ATP.

This sequence belongs to the formate--tetrahydrofolate ligase family.

It carries out the reaction (6S)-5,6,7,8-tetrahydrofolate + formate + ATP = (6R)-10-formyltetrahydrofolate + ADP + phosphate. The protein operates within one-carbon metabolism; tetrahydrofolate interconversion. The sequence is that of Formate--tetrahydrofolate ligase from Dehalococcoides mccartyi (strain ATCC BAA-2266 / KCTC 15142 / 195) (Dehalococcoides ethenogenes (strain 195)).